A 29-amino-acid polypeptide reads, in one-letter code: Thrombin-like enzyme collinein-2 (29 aa).

In terms of assembly, monomer. In terms of tissue distribution, expressed by the venom gland.

The protein resides in the secreted. Functionally, thrombin-like snake venom serine protease. In Crotalus durissus collilineatus (Brazilian rattlesnake), this protein is Thrombin-like enzyme collinein-2.